We begin with the raw amino-acid sequence, 98 residues long: NADH-ubiquinone oxidoreductase chain 4L (98 aa).

3 consecutive transmembrane segments (helical) span residues 1–21, 29–49, and 61–81; these read MTMV…GLLM, SLLC…VTIL, and IILL…LVMV.

It belongs to the complex I subunit 4L family. Core subunit of respiratory chain NADH dehydrogenase (Complex I) which is composed of 45 different subunits.

It localises to the mitochondrion inner membrane. It carries out the reaction a ubiquinone + NADH + 5 H(+)(in) = a ubiquinol + NAD(+) + 4 H(+)(out). In terms of biological role, core subunit of the mitochondrial membrane respiratory chain NADH dehydrogenase (Complex I) which catalyzes electron transfer from NADH through the respiratory chain, using ubiquinone as an electron acceptor. Part of the enzyme membrane arm which is embedded in the lipid bilayer and involved in proton translocation. The chain is NADH-ubiquinone oxidoreductase chain 4L (MT-ND4L) from Leptonychotes weddellii (Weddell seal).